Here is a 389-residue protein sequence, read N- to C-terminus: Formate-dependent phosphoribosylglycinamide formyltransferase (389 aa).

Residues 12 to 13 (EL) and Glu-72 each bind N(1)-(5-phospho-beta-D-ribosyl)glycinamide. ATP is bound by residues Arg-104, Lys-145, 150-155 (SSGKGQ), 185-188 (EEFI), and Glu-193. An ATP-grasp domain is found at 109-301 (DLAAKELGLK…EFELHLRAVL (193 aa)). 2 residues coordinate Mg(2+): Glu-258 and Glu-271. N(1)-(5-phospho-beta-D-ribosyl)glycinamide contacts are provided by residues Asp-278, Lys-350, and 357 to 358 (RR).

It belongs to the PurK/PurT family. In terms of assembly, homodimer.

It catalyses the reaction N(1)-(5-phospho-beta-D-ribosyl)glycinamide + formate + ATP = N(2)-formyl-N(1)-(5-phospho-beta-D-ribosyl)glycinamide + ADP + phosphate + H(+). It functions in the pathway purine metabolism; IMP biosynthesis via de novo pathway; N(2)-formyl-N(1)-(5-phospho-D-ribosyl)glycinamide from N(1)-(5-phospho-D-ribosyl)glycinamide (formate route): step 1/1. Functionally, involved in the de novo purine biosynthesis. Catalyzes the transfer of formate to 5-phospho-ribosyl-glycinamide (GAR), producing 5-phospho-ribosyl-N-formylglycinamide (FGAR). Formate is provided by PurU via hydrolysis of 10-formyl-tetrahydrofolate. In Phocaeicola vulgatus (strain ATCC 8482 / DSM 1447 / JCM 5826 / CCUG 4940 / NBRC 14291 / NCTC 11154) (Bacteroides vulgatus), this protein is Formate-dependent phosphoribosylglycinamide formyltransferase.